The primary structure comprises 95 residues: Large ribosomal subunit protein eL30 (95 aa).

This sequence belongs to the eukaryotic ribosomal protein eL30 family.

This is Large ribosomal subunit protein eL30 from Methanospirillum hungatei JF-1 (strain ATCC 27890 / DSM 864 / NBRC 100397 / JF-1).